The sequence spans 501 residues: L-arabinose isomerase (501 aa).

The Mn(2+) site is built by E306, E333, H350, and H449.

The protein belongs to the arabinose isomerase family. The cofactor is Mn(2+).

The catalysed reaction is beta-L-arabinopyranose = L-ribulose. Its pathway is carbohydrate degradation; L-arabinose degradation via L-ribulose; D-xylulose 5-phosphate from L-arabinose (bacterial route): step 1/3. Catalyzes the conversion of L-arabinose to L-ribulose. The protein is L-arabinose isomerase of Herpetosiphon aurantiacus (strain ATCC 23779 / DSM 785 / 114-95).